Consider the following 477-residue polypeptide: Penton protein (477 aa).

This sequence belongs to the adenoviridae penton family. Interacts with the fiber protein (via N-terminal tail region). Interacts with the capsid vertex protein; this interaction binds the penton base to neighboring peripentonal hexons.

It is found in the virion. Its subcellular location is the host nucleus. Its function is as follows. Major capsid protein that self-associates to form penton base pentamers, each in the shape of a pentagon, situated at the 12 vertices of the pseudo T=25 capsid. Involved in virus secondary attachment to host cell after initial attachment by the fiber protein, and in endocytosis of virions. As the virus enters the host cell, penton proteins are shed concomitant with virion acidification in the endosome. The chain is Penton protein from Canis lupus familiaris (Dog).